The primary structure comprises 143 residues: Lysozyme C (143 aa).

The first 15 residues, 1–15, serve as a signal peptide directing secretion; it reads MKIPVFLLLLALANA. The region spanning 16–143 is the C-type lysozyme domain; that stretch reads KVFQRCEWAR…LSAYIAGCGL (128 aa). 4 cysteine pairs are disulfide-bonded: Cys21/Cys141, Cys45/Cys129, Cys79/Cys94, and Cys90/Cys108. Active-site residues include Glu50 and Asp67.

It belongs to the glycosyl hydrolase 22 family. In terms of assembly, monomer.

The protein localises to the secreted. It catalyses the reaction Hydrolysis of (1-&gt;4)-beta-linkages between N-acetylmuramic acid and N-acetyl-D-glucosamine residues in a peptidoglycan and between N-acetyl-D-glucosamine residues in chitodextrins.. In terms of biological role, lysozymes have primarily a bacteriolytic function; those in tissues and body fluids are associated with the monocyte-macrophage system and enhance the activity of immunoagents. The sequence is that of Lysozyme C from Takifugu rubripes (Japanese pufferfish).